The chain runs to 78 residues: Delta-conotoxin TxVIA (78 aa).

A signal peptide spans Met1–Ala22. The propeptide occupies Asp23–Asn49. 3 disulfide bridges follow: Cys53–Cys68, Cys60–Cys72, and Cys67–Cys77. Met59 carries the methionine sulfoxide; partial modification.

This sequence belongs to the conotoxin O1 superfamily. As to expression, expressed by the venom duct.

The protein localises to the secreted. In terms of biological role, delta-conotoxins bind to site 6 of voltage-gated sodium channels (Nav) and inhibit the inactivation process. Binding of this toxin is strongly calcium-dependent but not voltage-dependent. The binding site is most likely on the extracellular side of the sodium channel. Binds receptor sites on both mollusk and rat central nervous system, but despite its high affinity binding to rat sodium channel, it has no functional effect in vivo and in vitro on it. Also has no effect on Gambusia fish. Is important in mollusk for the paralysis of the prey. Upon injection of the peptide, a subordinate lobster assumes an exaggerated dominant posture (of a 'King-Kong' lobster!). The protein is Delta-conotoxin TxVIA of Conus textile (Cloth-of-gold cone).